The chain runs to 214 residues: GTP-binding nuclear protein Ran (214 aa).

In terms of domain architecture, Small GTPase Ran-type spans 6 to 170; it reads YIPQYKLILV…LWLARRLSNQ (165 aa). Residue 17-24 coordinates GTP; the sequence is DGGVGKTT. Residues 36–44 form a switch-I region; the sequence is KKYIPTLGV. GTP contacts are provided by residues G67, 121–124, and 149–151; these read NKVD and SAR. The segment at 67 to 83 is switch-II; the sequence is GQEKFGGLRDGYYIKSD.

Belongs to the small GTPase superfamily. Ran family. In terms of assembly, found in a nuclear export complex with RanGTP, exportin and pre-miRNA.

It is found in the nucleus. Its function is as follows. GTP-binding protein involved in nucleocytoplasmic transport. Required for the import of protein into the nucleus and also for RNA export. Involved in chromatin condensation and control of cell cycle. This chain is GTP-binding nuclear protein Ran, found in Plasmodium falciparum.